A 201-amino-acid chain; its full sequence is Proteasome subunit beta type-2 (201 aa).

N-acetylmethionine is present on M1.

Belongs to the peptidase T1B family. The 26S proteasome consists of a 20S proteasome core and two 19S regulatory subunits. The 20S proteasome core is a barrel-shaped complex made of 28 subunits that are arranged in four stacked rings. The two outer rings are each formed by seven alpha subunits, and the two inner rings are formed by seven beta subunits. The proteolytic activity is exerted by three beta-subunits PSMB5, PSMB6 and PSMB7.

The protein resides in the cytoplasm. It is found in the nucleus. Functionally, non-catalytic component of the 20S core proteasome complex involved in the proteolytic degradation of most intracellular proteins. This complex plays numerous essential roles within the cell by associating with different regulatory particles. Associated with two 19S regulatory particles, forms the 26S proteasome and thus participates in the ATP-dependent degradation of ubiquitinated proteins. The 26S proteasome plays a key role in the maintenance of protein homeostasis by removing misfolded or damaged proteins that could impair cellular functions, and by removing proteins whose functions are no longer required. Associated with the PA200 or PA28, the 20S proteasome mediates ubiquitin-independent protein degradation. This type of proteolysis is required in several pathways including spermatogenesis (20S-PA200 complex) or generation of a subset of MHC class I-presented antigenic peptides (20S-PA28 complex). This chain is Proteasome subunit beta type-2 (PSMB2), found in Bos taurus (Bovine).